We begin with the raw amino-acid sequence, 211 residues long: 3,4-dihydroxy-2-butanone 4-phosphate synthase (211 aa).

D-ribulose 5-phosphate is bound by residues Arg-37 to Glu-38, Asp-42, Arg-150 to Thr-154, and Glu-174. Glu-38 is a Mg(2+) binding site. His-153 lines the Mg(2+) pocket.

It belongs to the DHBP synthase family. Homodimer. Requires Mg(2+) as cofactor. The cofactor is Mn(2+).

It carries out the reaction D-ribulose 5-phosphate = (2S)-2-hydroxy-3-oxobutyl phosphate + formate + H(+). Its pathway is cofactor biosynthesis; riboflavin biosynthesis; 2-hydroxy-3-oxobutyl phosphate from D-ribulose 5-phosphate: step 1/1. Catalyzes the conversion of D-ribulose 5-phosphate to formate and 3,4-dihydroxy-2-butanone 4-phosphate. The protein is 3,4-dihydroxy-2-butanone 4-phosphate synthase of Baumannia cicadellinicola subsp. Homalodisca coagulata.